The following is a 459-amino-acid chain: Transcription factor AP-2-beta (459 aa).

Lys-21 participates in a covalent cross-link: Glycyl lysine isopeptide (Lys-Gly) (interchain with G-Cter in SUMO). Residues His-30–Arg-139 are disordered. The segment covering Ser-35–Tyr-51 has biased composition (polar residues). The segment covering Leu-121–Leu-132 has biased composition (low complexity). Ser-258 is modified (phosphoserine; by PKA). Residues Arg-299–Asp-429 form an H-S-H (helix-span-helix), dimerization region. Residues Asn-435 to Lys-459 are disordered. Over residues Thr-450–Lys-459 the composition is skewed to basic and acidic residues.

It belongs to the AP-2 family. Binds DNA as a dimer. Can form homodimers or heterodimers with other AP-2 family members. Interacts with CITED4. Interacts with UBE2I. Interacts with KCTD1; this interaction represses transcription activation. Interacts with CITED2 (via C-terminus); the interaction stimulates TFAP2B-transcriptional activity. In terms of processing, sumoylated. Sumoylated on Lys-21; which inhibits transcriptional activity. In terms of tissue distribution, localizes to neurons in areas of the cerebral cortex, cerebellum and hypothalamus (at protein level).

Its subcellular location is the nucleus. In terms of biological role, sequence-specific DNA-binding protein that interacts with inducible viral and cellular enhancer elements to regulate transcription of selected genes. AP-2 factors bind to the consensus sequence 5'-GCCNNNGGC-3' and activate genes involved in a large spectrum of important biological functions including proper eye, face, body wall, limb and neural tube development. They also suppress a number of genes including MCAM/MUC18, C/EBP alpha and MYC. AP-2-beta appears to be required for normal face and limb development and for proper terminal differentiation and function of renal tubular epithelia. The polypeptide is Transcription factor AP-2-beta (Tfap2b) (Mus musculus (Mouse)).